A 224-amino-acid chain; its full sequence is Na(+)-translocating NADH-quinone reductase subunit D (224 aa).

A run of 5 helical transmembrane segments spans residues 43–63 (TVMAIALTLVTGFSNLFISMI), 67–87 (IPSSIRMIVQMVIIASLVIVV), 104–124 (VFVGLIITNCIVMGRAEAFAM), 132–152 (FFDGIGNGLGYSAMLLVLGFV), and 179–199 (NGLLLLPPSAFFLIGLIIWAL).

Belongs to the NqrDE/RnfAE family. In terms of assembly, composed of six subunits; NqrA, NqrB, NqrC, NqrD, NqrE and NqrF.

It is found in the cell inner membrane. It carries out the reaction a ubiquinone + n Na(+)(in) + NADH + H(+) = a ubiquinol + n Na(+)(out) + NAD(+). NQR complex catalyzes the reduction of ubiquinone-1 to ubiquinol by two successive reactions, coupled with the transport of Na(+) ions from the cytoplasm to the periplasm. NqrA to NqrE are probably involved in the second step, the conversion of ubisemiquinone to ubiquinol. This Pseudomonas aeruginosa (strain LESB58) protein is Na(+)-translocating NADH-quinone reductase subunit D.